Here is a 156-residue protein sequence, read N- to C-terminus: uncharacterized protein (156 aa).

The next 5 helical transmembrane spans lie at 7-29 (AQISVVLSTIIIMTYAFLSSYFL), 42-64 (YFALSNLLSLSLPFVCAWFPYLF), 69-88 (AVTGSALSAFGLFLFFAITS), 98-120 (AAIWVIYFFWLIGAALAGVYPAL), and 133-155 (ALVLSALFTVVVSFIIGFLISRI).

It is found in the cell membrane. This is an uncharacterized protein from Pasteurella multocida (strain Pm70).